Here is a 271-residue protein sequence, read N- to C-terminus: Thermoregulatory protein LcrF (271 aa).

An HTH araC/xylS-type domain is found at 167–265 (ERLQKFMEEN…GCTPSQARLT (99 aa)). 2 consecutive DNA-binding regions (H-T-H motif) follow at residues 184–205 (SKFAREFGMGLTTFKELFGTVY) and 232–255 (IVDIAMEAGFSSQSYFTQSYRRRF).

Transcriptional activator of the thermally regulated virulent yopE gene. LcrF activity could be modulated by the interaction with an inducer molecule serving as a temperature messenger. The availability of the messenger would in turn be controlled by a temperature-responsive process serving as a cellular thermometer. This is Thermoregulatory protein LcrF (lcrF) from Yersinia pestis.